The following is a 345-amino-acid chain: Altered inheritance of mitochondria protein 39, mitochondrial (345 aa).

The N-terminal 29 residues, methionine 1–tyrosine 29, are a transit peptide targeting the mitochondrion. The segment at asparagine 46–aspartate 91 is disordered. Residues lysine 64–histidine 75 are compositionally biased toward polar residues. A compositionally biased stretch (low complexity) spans asparagine 76–serine 89. The helical transmembrane segment at leucine 113–leucine 133 threads the bilayer.

The protein belongs to the AIM39 family.

The protein resides in the mitochondrion membrane. This chain is Altered inheritance of mitochondria protein 39, mitochondrial (AIM39), found in Vanderwaltozyma polyspora (strain ATCC 22028 / DSM 70294 / BCRC 21397 / CBS 2163 / NBRC 10782 / NRRL Y-8283 / UCD 57-17) (Kluyveromyces polysporus).